The chain runs to 488 residues: Serine hydroxymethyltransferase, mitochondrial (488 aa).

Residues 1-20 (MAVLRQFVKNSYSSIPKRFY) constitute a mitochondrion transit peptide. Lysine 265 is modified (N6-(pyridoxal phosphate)lysine).

Belongs to the SHMT family. As to quaternary structure, homotetramer. It depends on pyridoxal 5'-phosphate as a cofactor.

It is found in the mitochondrion. It catalyses the reaction (6R)-5,10-methylene-5,6,7,8-tetrahydrofolate + glycine + H2O = (6S)-5,6,7,8-tetrahydrofolate + L-serine. Its pathway is one-carbon metabolism; tetrahydrofolate interconversion. In terms of biological role, interconversion of serine and glycine. The protein is Serine hydroxymethyltransferase, mitochondrial (shm2) of Schizosaccharomyces pombe (strain 972 / ATCC 24843) (Fission yeast).